The sequence spans 171 residues: 3-hydroxydecanoyl-[acyl-carrier-protein] dehydratase (171 aa).

His70 is a catalytic residue.

Belongs to the thioester dehydratase family. FabA subfamily. As to quaternary structure, homodimer.

The protein localises to the cytoplasm. The catalysed reaction is a (3R)-hydroxyacyl-[ACP] = a (2E)-enoyl-[ACP] + H2O. The enzyme catalyses (3R)-hydroxydecanoyl-[ACP] = (2E)-decenoyl-[ACP] + H2O. It carries out the reaction (2E)-decenoyl-[ACP] = (3Z)-decenoyl-[ACP]. It participates in lipid metabolism; fatty acid biosynthesis. In terms of biological role, necessary for the introduction of cis unsaturation into fatty acids. Catalyzes the dehydration of (3R)-3-hydroxydecanoyl-ACP to E-(2)-decenoyl-ACP and then its isomerization to Z-(3)-decenoyl-ACP. Can catalyze the dehydratase reaction for beta-hydroxyacyl-ACPs with saturated chain lengths up to 16:0, being most active on intermediate chain length. This Methylococcus capsulatus (strain ATCC 33009 / NCIMB 11132 / Bath) protein is 3-hydroxydecanoyl-[acyl-carrier-protein] dehydratase.